We begin with the raw amino-acid sequence, 278 residues long: Tropomyosin A (278 aa).

Residues 1-270 (IMMAMKLEKE…YRAISGELDT (270 aa)) adopt a coiled-coil conformation. Positions 92–134 (DFEQSSGRLTETSTKLDDASKAAEESERNRKTLETRSISDDER) are disordered. The span at 95–104 (QSSGRLTETS) shows a compositional bias: polar residues. Over residues 105–134 (TKLDDASKAAEESERNRKTLETRSISDDER) the composition is skewed to basic and acidic residues.

Belongs to the tropomyosin family. As to quaternary structure, homodimer.

Tropomyosin, in association with the troponin complex, plays a central role in the calcium dependent regulation of muscle contraction. This is Tropomyosin A from Echinococcus granulosus (Hydatid tapeworm).